Consider the following 364-residue polypeptide: Triacylglycerol lipase (364 aa).

The signal sequence occupies residues 1 to 44 (MARTMRSRVVAGAVACAMSIAPFAGTTAVMTLATTHAAMAATAP). Residues 54–266 (PIILVHGLSG…AIQPTLSVFG (213 aa)) form the AB hydrolase-1 domain. Leucine 61 serves as a coordination point for substrate. The active-site Nucleophile is the serine 131. A substrate-binding site is contributed by glutamine 132. A disulfide bridge links cysteine 234 with cysteine 314. A Ca(2+)-binding site is contributed by aspartate 286. Residues aspartate 308 and histidine 330 each act as charge relay system in the active site. Residues aspartate 332, glutamine 336, and valine 340 each coordinate Ca(2+).

It belongs to the AB hydrolase superfamily. Pseudomonas lipase family. Monomer. Ca(2+) is required as a cofactor.

The protein resides in the secreted. The catalysed reaction is a triacylglycerol + H2O = a diacylglycerol + a fatty acid + H(+). Inhibited by RC-(Rp,Sp)- and SC-(Rp,Sp)-1,2-dioctylcarbamoylglycero-3-O-p-nitrophenyl octylphosphonate. Also inhibited by diethyl-p-nitrophenylphosphate (E600). Functionally, catalyzes the hydrolysis of triacylglycerol. It shows a preference for triacylglycerols with a chain length between 6 and 12 carbons. This is Triacylglycerol lipase from Burkholderia cepacia (Pseudomonas cepacia).